A 343-amino-acid chain; its full sequence is L-threonine 3-dehydrogenase (343 aa).

A Zn(2+)-binding site is contributed by cysteine 38. Active-site charge relay system residues include threonine 40 and histidine 43. Residues histidine 63, glutamate 64, cysteine 93, cysteine 96, cysteine 99, and cysteine 107 each contribute to the Zn(2+) site. Residues isoleucine 175, aspartate 195, arginine 200, 262–264 (LGI), and 286–287 (IY) each bind NAD(+).

It belongs to the zinc-containing alcohol dehydrogenase family. As to quaternary structure, homotetramer. Zn(2+) is required as a cofactor.

It localises to the cytoplasm. The catalysed reaction is L-threonine + NAD(+) = (2S)-2-amino-3-oxobutanoate + NADH + H(+). It participates in amino-acid degradation; L-threonine degradation via oxydo-reductase pathway; glycine from L-threonine: step 1/2. Catalyzes the NAD(+)-dependent oxidation of L-threonine to 2-amino-3-ketobutyrate. This Burkholderia mallei (strain NCTC 10247) protein is L-threonine 3-dehydrogenase.